Here is a 143-residue protein sequence, read N- to C-terminus: Acetyltransferase plu1384 (143 aa).

Residues 1-138 (MEIRVFRQDD…ESVIFSKRLI (138 aa)) form the N-acetyltransferase domain.

Belongs to the acetyltransferase family. YpeA subfamily.

The protein is Acetyltransferase plu1384 of Photorhabdus laumondii subsp. laumondii (strain DSM 15139 / CIP 105565 / TT01) (Photorhabdus luminescens subsp. laumondii).